The sequence spans 145 residues: uncharacterized protein (145 aa).

Residues 1 to 49 form a disordered region; the sequence is MLSIFKNLLGTSEEDGTTQEANSKDTKGLKEERKRKKRKNKYKIPPGHT. Basic and acidic residues predominate over residues 22-32; it reads NSKDTKGLKEE. The span at 33–42 shows a compositional bias: basic residues; sequence RKRKKRKNKY. S68 is modified (phosphoserine). Residues 69-145 enclose the Cytochrome b5 heme-binding domain; that stretch reads PISVTAEELA…LKTSFVGYLV (77 aa). H104 and H127 together coordinate heme.

This sequence belongs to the cytochrome b5 family.

The protein resides in the cytoplasm. This is an uncharacterized protein from Schizosaccharomyces pombe (strain 972 / ATCC 24843) (Fission yeast).